A 196-amino-acid polypeptide reads, in one-letter code: Probable malonic semialdehyde reductase RutE (196 aa).

Belongs to the nitroreductase family. HadB/RutE subfamily. The cofactor is FMN.

The catalysed reaction is 3-hydroxypropanoate + NADP(+) = 3-oxopropanoate + NADPH + H(+). May reduce toxic product malonic semialdehyde to 3-hydroxypropionic acid, which is excreted. This chain is Probable malonic semialdehyde reductase RutE, found in Yersinia enterocolitica serotype O:8 / biotype 1B (strain NCTC 13174 / 8081).